Here is a 559-residue protein sequence, read N- to C-terminus: Membrane protein insertase YidC (559 aa).

The helical transmembrane segment at 6-26 (TVLWMIFSFSLLLLWNNWQIH) threads the bilayer. The tract at residues 34-80 (GGPSPEQNAPATANNQAATNPASNTPAVPNAPAATSAPSSVPGSTAP) is disordered. Residues 42–80 (APATANNQAATNPASNTPAVPNAPAATSAPSSVPGSTAP) show a composition bias toward low complexity. The next 4 membrane-spanning stretches (helical) occupy residues 367–387 (LLGNWGWTIVALTVIIKAVFY), 441–461 (LPMVVQIPVFIALYWVLLASV), 480–500 (PYFILPAVMMATMFLQIKLNP), and 510–530 (VMMVMPLVFGGMMFFFPAGLV).

This sequence belongs to the OXA1/ALB3/YidC family. Type 1 subfamily. Interacts with the Sec translocase complex via SecD. Specifically interacts with transmembrane segments of nascent integral membrane proteins during membrane integration.

Its subcellular location is the cell inner membrane. Required for the insertion and/or proper folding and/or complex formation of integral membrane proteins into the membrane. Involved in integration of membrane proteins that insert both dependently and independently of the Sec translocase complex, as well as at least some lipoproteins. Aids folding of multispanning membrane proteins. The protein is Membrane protein insertase YidC of Bordetella avium (strain 197N).